Here is a 76-residue protein sequence, read N- to C-terminus: Conotoxin PnMKLT1-1111 (76 aa).

A signal peptide spans 1 to 22; it reads MKLTCMMIVAVLFLTAWTVVTA. Residues 23 to 50 constitute a propeptide that is removed on maturation; sequence VPHSNKRLANLYLKARHEMKNPEASNVD. Disulfide bonds link Cys-53-Cys-67, Cys-60-Cys-71, and Cys-66-Cys-75.

The protein belongs to the conotoxin O1 superfamily. As to expression, expressed by the venom duct.

The protein resides in the secreted. The chain is Conotoxin PnMKLT1-1111 from Conus pennaceus (Feathered cone).